A 647-amino-acid chain; its full sequence is Meiotically up-regulated protein C8C9.04 (647 aa).

2 disordered regions span residues 1 to 241 (MTTN…ELKP) and 387 to 647 (RAQQ…KLFH). A compositionally biased stretch (polar residues) spans 29–46 (KSTNAVEQNNNSSQASVT). Residues 49–67 (NKKKAAKRAKKKAAKKKKQ) are compositionally biased toward basic residues. The span at 92–103 (TILQEPGFTQTI) shows a compositional bias: polar residues. Residues 134–145 (PSASTSTAVPTT) are compositionally biased toward low complexity. The span at 146 to 155 (EARNTSITEP) shows a compositional bias: polar residues. Positions 156–177 (ANSPSSSSSSASTKSTATTQSA) are enriched in low complexity. A phosphoserine mark is found at Ser-162 and Ser-165. At Thr-168 the chain carries Phosphothreonine. The span at 193 to 215 (QLGNSPASITSKPATTSAAQPSS) shows a compositional bias: polar residues. Residues Ser-197 and Ser-200 each carry the phosphoserine modification. Over residues 232–241 (AEKEIPELKP) the composition is skewed to basic and acidic residues. Composition is skewed to polar residues over residues 390 to 406 (QPEQ…TETV), 413 to 432 (VSST…TESE), and 488 to 508 (PSST…AQSS). Ser-396 is subject to Phosphoserine. Phosphoserine is present on residues Ser-489 and Ser-490. Residue Thr-491 is modified to Phosphothreonine. Phosphoserine occurs at positions 515, 519, and 523. Positions 518–530 (ASAPSSPGTTSAA) are enriched in low complexity. Over residues 561-589 (GSATTIPSPGSATTKPTPGSATTKPTPVS) the composition is skewed to polar residues. The span at 596-613 (AGTTKPAPAAGATATAEN) shows a compositional bias: low complexity. Basic residues predominate over residues 633–647 (SWFKRMKKSFGKLFH).

In terms of biological role, has a role in meiosis and sporulation. This chain is Meiotically up-regulated protein C8C9.04, found in Schizosaccharomyces pombe (strain 972 / ATCC 24843) (Fission yeast).